The chain runs to 246 residues: Transmembrane and ubiquitin-like domain-containing protein 1 (246 aa).

The segment at 2–30 (TLIEGVGDEVTVLFSVLACLLVLALAWVS) is required to release iHOPS from membranes. Residues 11–31 (VTVLFSVLACLLVLALAWVST) form a helical membrane-spanning segment. The tract at residues 34–101 (AEGGDPLPQP…TPPAPDSPQE (68 aa)) is disordered. Pro residues predominate over residues 40-50 (LPQPSGTPTPS). Thr71 bears the Phosphothreonine mark. Ser73 is modified (phosphoserine). Thr92 bears the Phosphothreonine mark. Ser98 and Ser127 each carry phosphoserine. The Ubiquitin-like domain maps to 103–176 (LVLRLKFLND…LHCHVSTRVG (74 aa)). 2 helical membrane passes run 195–215 (IGSL…YCQI) and 221–241 (FPLT…LLAF).

As to quaternary structure, interacts with EEF1A1, GRIA2, GRIP1, CAMLG, TUBG1. Interacts with NPM1 and CDKN2A; TMUB1 can enhance interaction between NPM1 and CDKN2A and is proposed to bridge the proteins; proposed to be mediated by iHOPS. Interacts with ERLIN2 and AMFR; TMUB1 promotes the interaction of ERLIN2 with AMFR. Post-translationally, processed by regulated intramembrane proteolysis (RIP)in the N-terminus to release iHOPS from membranes. Ubiquitously expressed with highest levels in mammary and thyroid glands, bone marrow and spleen; limited expression in cardiac, pancreatic and ovarian tissues.

The protein resides in the membrane. It localises to the postsynaptic cell membrane. Its subcellular location is the recycling endosome. It is found in the cytoplasm. The protein localises to the nucleus. The protein resides in the nucleolus. It localises to the cytoskeleton. Its subcellular location is the microtubule organizing center. It is found in the centrosome. Functionally, involved in sterol-regulated ubiquitination and degradation of HMG-CoA reductase HMGCR. Involved in positive regulation of AMPA-selective glutamate receptor GRIA2 recycling to the cell surface. Acts as a negative regulator of hepatocyte growth during regeneration. Its function is as follows. May contribute to the regulation of translation during cell-cycle progression. May contribute to the regulation of cell proliferation. May be involved in centrosome assembly. Modulates stabilization and nucleolar localization of tumor suppressor CDKN2A and enhances association between CDKN2A and NPM1. In Homo sapiens (Human), this protein is Transmembrane and ubiquitin-like domain-containing protein 1 (TMUB1).